A 501-amino-acid chain; its full sequence is Cytochrome P450 2J4 (501 aa).

Helical transmembrane passes span 12–32 (IWAA…LLLA) and 77–97 (NIFS…LPLI). C447 serves as a coordination point for heme.

The protein belongs to the cytochrome P450 family. The cofactor is heme. In terms of tissue distribution, expressed in small intestinal enterocytes (at protein level). In the intestinal crypt, expressed at higher levels in the mature villous cells than in undifferentiated crypt cells (at protein level). Expressed in liver, kidney, lung, and olfactory mucosa (at protein level).

The protein localises to the endoplasmic reticulum membrane. It localises to the microsome membrane. It catalyses the reaction an organic molecule + reduced [NADPH--hemoprotein reductase] + O2 = an alcohol + oxidized [NADPH--hemoprotein reductase] + H2O + H(+). It carries out the reaction (5Z,8Z,11Z,14Z)-eicosatetraenoate + reduced [NADPH--hemoprotein reductase] + O2 = 19-hydroxy-(5Z,8Z,11Z,14Z)-eicosatetraenoate + oxidized [NADPH--hemoprotein reductase] + H2O + H(+). The catalysed reaction is all-trans-retinal + reduced [NADPH--hemoprotein reductase] + O2 = all-trans-retinoate + oxidized [NADPH--hemoprotein reductase] + H2O + 2 H(+). The enzyme catalyses 9-cis-retinal + reduced [NADPH--hemoprotein reductase] + O2 = 9-cis-retinoate + oxidized [NADPH--hemoprotein reductase] + H2O + 2 H(+). It functions in the pathway lipid metabolism; arachidonate metabolism. The protein operates within cofactor metabolism; retinol metabolism. A cytochrome P450 monooxygenase that may play a major role in intestinal retinoid metabolism. Catalyzes the oxidative transformation of all-trans retinal and 9-cis-retinal to the corresponding active forms all-trans and 9-cis retinoic acids. Catalyzes the hydroxylation of carbon-hydrogen bonds. Hydroxylates arachidonic acid predominantly at the omega-1 position. Mechanistically, uses molecular oxygen inserting one oxygen atom into a substrate, and reducing the second into a water molecule, with two electrons provided by NADPH via cytochrome P450 reductase (CPR; NADPH--hemoprotein reductase). The chain is Cytochrome P450 2J4 from Rattus norvegicus (Rat).